A 477-amino-acid chain; its full sequence is Ribosomal RNA small subunit methyltransferase F (477 aa).

Residues 125–131 (AAAPGSK), Glu-149, Asp-176, and Asp-194 contribute to the S-adenosyl-L-methionine site. Cys-247 acts as the Nucleophile in catalysis.

This sequence belongs to the class I-like SAM-binding methyltransferase superfamily. RsmB/NOP family.

Its subcellular location is the cytoplasm. It carries out the reaction cytidine(1407) in 16S rRNA + S-adenosyl-L-methionine = 5-methylcytidine(1407) in 16S rRNA + S-adenosyl-L-homocysteine + H(+). Functionally, specifically methylates the cytosine at position 1407 (m5C1407) of 16S rRNA. This Klebsiella pneumoniae (strain 342) protein is Ribosomal RNA small subunit methyltransferase F.